We begin with the raw amino-acid sequence, 348 residues long: NADH-ubiquinone oxidoreductase chain 2 (348 aa).

A run of 10 helical transmembrane segments spans residues 2–22 (SPYVFLIISISLFLGTSLTLF), 26–46 (WLMAWMGLEINTLAIIPMMTY), 55–75 (AAIKYFLTQATASMLVMFAII), 96–116 (VLMTLALAMKLGLAPFHFWVP), 149–169 (LNMKVLITLAFLSTMLGGWGG), 178–198 (ILAYSSIAHMGWMTIVMMINP), 199–219 (SLALLNLLIYIIATLTLFLML), 242–262 (TAILLTLLSLGGLPPLTGFMP), 276–296 (IIMATLMALSALLNLFFYMRI), and 323–343 (INIIPTLTIISSLLLPLTPLL).

It belongs to the complex I subunit 2 family. As to quaternary structure, core subunit of respiratory chain NADH dehydrogenase (Complex I) which is composed of 45 different subunits. Interacts with TMEM242.

It is found in the mitochondrion inner membrane. It catalyses the reaction a ubiquinone + NADH + 5 H(+)(in) = a ubiquinol + NAD(+) + 4 H(+)(out). Its function is as follows. Core subunit of the mitochondrial membrane respiratory chain NADH dehydrogenase (Complex I) that is believed to belong to the minimal assembly required for catalysis. Complex I functions in the transfer of electrons from NADH to the respiratory chain. The immediate electron acceptor for the enzyme is believed to be ubiquinone. The protein is NADH-ubiquinone oxidoreductase chain 2 of Osphranter robustus (Wallaroo).